We begin with the raw amino-acid sequence, 466 residues long: Ribulose bisphosphate carboxylase large chain (466 aa).

N6,N6,N6-trimethyllysine is present on K5. N114 and T164 together coordinate substrate. The active-site Proton acceptor is the K166. K168 provides a ligand contact to substrate. Mg(2+) is bound by residues K192, D194, and E195. K192 is subject to N6-carboxylysine. H285 acts as the Proton acceptor in catalysis. Substrate-binding residues include R286, H318, and S370.

The protein belongs to the RuBisCO large chain family. Type I subfamily. In terms of assembly, heterohexadecamer of 8 large chains and 8 small chains; disulfide-linked. The disulfide link is formed within the large subunit homodimers. Mg(2+) is required as a cofactor. In terms of processing, the disulfide bond which can form in the large chain dimeric partners within the hexadecamer appears to be associated with oxidative stress and protein turnover.

The protein resides in the plastid. The protein localises to the chloroplast. The enzyme catalyses 2 (2R)-3-phosphoglycerate + 2 H(+) = D-ribulose 1,5-bisphosphate + CO2 + H2O. It carries out the reaction D-ribulose 1,5-bisphosphate + O2 = 2-phosphoglycolate + (2R)-3-phosphoglycerate + 2 H(+). In terms of biological role, ruBisCO catalyzes two reactions: the carboxylation of D-ribulose 1,5-bisphosphate, the primary event in carbon dioxide fixation, as well as the oxidative fragmentation of the pentose substrate in the photorespiration process. Both reactions occur simultaneously and in competition at the same active site. This chain is Ribulose bisphosphate carboxylase large chain, found in Bixa orellana (Lipstick tree).